The following is a 454-amino-acid chain: MGENDPPAVEAPFSFRSLFGLDDLKISPVAPDADAVAAQILSLLPLKFFPIIVIGIIALILALAIGLGIHFDCSGKYRCRSSFKCIELIARCDGVSDCKDGEDEYRCVRVGGQNAVLQVFTAASWKTMCSDDWKGHYANVACAQLGFPSYVSSDNLRVSSLEGQFREEFVSIDHLLPDDKVTALHHSVYVREGCASGHVVTLQCTACGHRRGYSSRIVGGNMSLLSQWPWQASLQFQGYHLCGGSVITPLWIITAAHCVYDLYLPKSWTIQVGLVSLLDNPAPSHLVEKIVYHSKYKPKRLGNDIALMKLAGPLTFNEMIQPVCLPNSEENFPDGKVCWTSGWGATEDGAGDASPVLNHAAVPLISNKICNHRDVYGGIISPSMLCAGYLTGGVDSCQGDSGGPLVCQERRLWKLVGATSFGIGCAEVNKPGVYTRVTSFLDWIHEQMERDLKT.

Over 1–48 (MGENDPPAVEAPFSFRSLFGLDDLKISPVAPDADAVAAQILSLLPLKF) the chain is Cytoplasmic. The helical; Signal-anchor for type II membrane protein transmembrane segment at 49 to 69 (FPIIVIGIIALILALAIGLGI) threads the bilayer. Over 70–454 (HFDCSGKYRC…HEQMERDLKT (385 aa)) the chain is Extracellular. The 37-residue stretch at 72–108 (DCSGKYRCRSSFKCIELIARCDGVSDCKDGEDEYRCV) folds into the LDL-receptor class A domain. 10 disulfides stabilise this stretch: Cys-73-Cys-85, Cys-79-Cys-98, Cys-92-Cys-107, Cys-129-Cys-194, Cys-142-Cys-204, Cys-207-Cys-324, Cys-242-Cys-258, Cys-338-Cys-407, Cys-370-Cys-386, and Cys-397-Cys-425. Residues 109–205 (RVGGQNAVLQ…SGHVVTLQCT (97 aa)) enclose the SRCR domain. The region spanning 217–449 (IVGGNMSLLS…FLDWIHEQME (233 aa)) is the Peptidase S1 domain. The N-linked (GlcNAc...) asparagine glycan is linked to Asn-221. Active-site charge relay system residues include His-257 and Asp-304. The active-site Charge relay system is Ser-401.

It belongs to the peptidase S1 family. Undergoes autoproteolytic activation. In terms of tissue distribution, expressed in many tissues including fetal cochlea. Isoform T is found at increased levels in some carcinomas.

The protein resides in the endoplasmic reticulum membrane. In terms of biological role, probable serine protease that plays a role in hearing. Acts as a permissive factor for cochlear hair cell survival and activation at the onset of hearing and is required for saccular hair cell survival. Activates ENaC (in vitro). The protein is Transmembrane protease serine 3 (TMPRSS3) of Homo sapiens (Human).